A 203-amino-acid polypeptide reads, in one-letter code: Cbp/p300-interacting transactivator 1 (203 aa).

2 disordered regions span residues 1-24 and 51-86; these read MPTM…DANQ and TANG…PSFN. Positions 61 to 84 are enriched in low complexity; it reads PTSSSGSTSPIGSPTATPSSKPPS. The short motif at 168-177 is the Nuclear export signal element; the sequence is LMSLVVELGL.

The protein belongs to the CITED family. Homodimer. Binds to RBM14. Interacts (via N-terminus) with HSPA8; the interaction suppresses the association of CITED1 with p300/CBP and SMAD-mediated transcription transactivation. Interacts (via C-terminus) with TOX3 (via HGM box); the interaction increases estrogen-response element (ERE)-dependent transcription and protection against cell death. Interacts with ESR1; the interaction occurs in a estrogen-dependent manner. Interacts (unphosphorylated form preferentially and via C-terminus) with EP300. Interacts (via C-terminus) with CREBBP. Interacts with EGR2. Post-translationally, phosphorylated. Phosphorylation changes in a cell cycle-dependent manner and reduces its transcriptional cofactor activity. Expressed in calvarial osteoblasts. Expressed in nulliparous mammary epithelial cells; absent in pregnant mice and in lacting mammary glands. Also expressed in mammary tumors (at protein level). Expressed only in melanocytes and testis. Expressed at high levels in the strongly pigmented melanoma cells but at low levels in the weakly pigmented cells.

It localises to the nucleus. Its subcellular location is the cytoplasm. Its function is as follows. Transcriptional coactivator of the p300/CBP-mediated transcription complex. Enhances SMAD-mediated transcription by strengthening the functional link between the DNA-binding SMAD transcription factors and the p300/CBP transcription coactivator complex. Stimulates estrogen-dependent transactivation activity mediated by estrogen receptors signaling; stabilizes the interaction of estrogen receptor ESR1 and histone acetyltransferase EP300. Positively regulates TGF-beta signaling through its association with the SMAD/p300/CBP-mediated transcriptional coactivator complex. Induces transcription from estrogen-responsive promoters and protection against cell death. Potentiates EGR2-mediated transcriptional activation activity from the ERBB2 promoter. Acts as an inhibitor of osteoblastic mineralization through a cAMP-dependent parathyroid hormone receptor signaling. May play a role in pigmentation of melanocytes. Associates with chromatin to the estrogen-responsive TGF-alpha promoter region in a estrogen-dependent manner. In Mus musculus (Mouse), this protein is Cbp/p300-interacting transactivator 1 (Cited1).